We begin with the raw amino-acid sequence, 358 residues long: Probable BOI-related E3 ubiquitin-protein ligase 2 (358 aa).

Positions 171–234 form a coiled coil; it reads KYEIEEKRKR…NQIWRDLAQT (64 aa). The interval 214–250 is WRD domain; the sequence is LEERVKSLSIENQIWRDLAQTNEATANHLRTNLEHVL. The segment at 310 to 345 adopts an RING-type zinc-finger fold; it reads CRNCGEEESCVLLLPCRHLCLCGVCGSSVHTCPICT.

As to quaternary structure, interacts with the DELLA proteins GAI, RGA, RGL1, RGL2 and RGL3.

It carries out the reaction S-ubiquitinyl-[E2 ubiquitin-conjugating enzyme]-L-cysteine + [acceptor protein]-L-lysine = [E2 ubiquitin-conjugating enzyme]-L-cysteine + N(6)-ubiquitinyl-[acceptor protein]-L-lysine.. The protein operates within protein degradation; proteasomal ubiquitin-dependent pathway. Functionally, probable E3 ubiquitin-protein ligase. Has no effect on the stability of the DELLA proteins. The sequence is that of Probable BOI-related E3 ubiquitin-protein ligase 2 (BRG2) from Arabidopsis thaliana (Mouse-ear cress).